The primary structure comprises 505 residues: Lysine--tRNA ligase, heat inducible (505 aa).

An N6-acetyllysine mark is found at lysine 114 and lysine 156. The Mg(2+) site is built by glutamate 415 and glutamate 422.

Belongs to the class-II aminoacyl-tRNA synthetase family. In terms of assembly, homodimer. Requires Mg(2+) as cofactor.

The protein resides in the cytoplasm. The enzyme catalyses tRNA(Lys) + L-lysine + ATP = L-lysyl-tRNA(Lys) + AMP + diphosphate. The sequence is that of Lysine--tRNA ligase, heat inducible (lysU) from Escherichia coli O157:H7.